The following is a 509-amino-acid chain: MEPAGPAPGRLGPLLFCLLLSASCFCAGASGKELKVTQADKSVSVAAGDSATLNCTVSSLTPVGPIKWFKGEGQNRSPIYSFIGGEHFPRITNVSDATKRNNMDFSICISNVTPEDAGTYYCVKFQKGIVEPDTEIKSGGGTTLYVLAKPSSPEVSGPDSRGSPGQTVNFTCKSYGFSPRNITLKWLKDGKELSHLETTISSKSNVSYNISSTVSVKLSPEDIHSRVICEVAHVTLEGRPLNGTANFSNIIRVSPTLKITQQPLTPASQVNLTCQVQKFYPKALQLNWLENGNLSRTDKPEHFTDNRDGTYNYTSLFLVNSSAHREDVVFTCQVEHDSQPAITENHTVRAFAHSSSGGSMETIPDNNAYYNWNVFIGVGVACALLVVLLMAALYLLRIKQKKAKGSTSSTRLHEPEKNAREITQIQDTNDINDITYADLNLPKEKKPAPRVPEPNNHTEYASIETGKLPRPEDTLTYADLDMVHLNRAQPTPKPEPSFSEYASVQVQRK.

The N-terminal stretch at 1–31 (MEPAGPAPGRLGPLLFCLLLSASCFCAGASG) is a signal peptide. One can recognise an Ig-like V-type domain in the interval 32-138 (KELKVTQADK…IVEPDTEIKS (107 aa)). Over 32-373 (KELKVTQADK…PDNNAYYNWN (342 aa)) the chain is Extracellular. Asparagine 54, asparagine 93, asparagine 169, asparagine 181, asparagine 205, asparagine 209, asparagine 242, asparagine 246, asparagine 271, asparagine 293, asparagine 312, asparagine 320, and asparagine 345 each carry an N-linked (GlcNAc...) asparagine glycan. A disulfide bridge connects residues cysteine 55 and cysteine 122. Ig-like C1-type domains follow at residues 150-248 (PSSP…ANFS) and 255-349 (PTLK…HTVR). A disulfide bridge connects residues cysteine 172 and cysteine 229. Cysteine 274 and cysteine 332 form a disulfide bridge. Residues 374–394 (VFIGVGVACALLVVLLMAALY) form a helical membrane-spanning segment. The Cytoplasmic segment spans residues 395–509 (LLRIKQKKAK…EYASVQVQRK (115 aa)). Tyrosine 436 bears the Phosphotyrosine; by Tyr-kinases mark. An SH2-binding motif is present at residues 436 to 439 (YADL). The tract at residues 441–472 (LPKEKKPAPRVPEPNNHTEYASIETGKLPRPE) is disordered. The SH3-binding motif lies at 446–451 (KPAPRV). Residues tyrosine 460, tyrosine 477, and tyrosine 501 each carry the phosphotyrosine; by Tyr-kinases modification. 3 consecutive short sequence motifs (SH2-binding) follow at residues 460 to 463 (YASI), 477 to 480 (YADL), and 501 to 504 (YASV). Positions 485 to 509 (LNRAQPTPKPEPSFSEYASVQVQRK) are disordered. Positions 500–509 (EYASVQVQRK) are enriched in polar residues.

In terms of assembly, binds PTPN11 when tyrosine-phosphorylated, except in macrophages, where it primarily binds PTPN6. Binds GRB2 in vitro. Binds FGR. Binds JAK2 irrespective of its phosphorylation status and forms a stable complex. Binds SCAP1 and/or SCAP2. The resulting complex recruits FYB1. Binds PTK2B. Interacts with TRIM2. N-glycosylated. Post-translationally, phosphorylated on tyrosine residues in response to insulin, cell adhesion or epidermal growth factors. Dephosphorylated by PTPN11. In terms of tissue distribution, highly expressed in brain, spleen, lung, liver and kidney. Detected at lower levels in heart. Highly expressed in alveolar and peritoneal macrophages, and at lower levels in dendritic cells.

It localises to the membrane. Its function is as follows. Immunoglobulin-like cell surface receptor for CD47. Acts as docking protein and induces translocation of PTPN6, PTPN11 and other binding partners from the cytosol to the plasma membrane. Supports adhesion of cerebellar neurons, neurite outgrowth and glial cell attachment. May play a key role in intracellular signaling during synaptogenesis and in synaptic function. Involved in the negative regulation of receptor tyrosine kinase-coupled cellular responses induced by cell adhesion, growth factors or insulin. Mediates negative regulation of phagocytosis, mast cell activation and dendritic cell activation. CD47 binding prevents maturation of immature dendritic cells and inhibits cytokine production by mature dendritic cells. Plays a role in antiviral immunity and limits new world arenavirus infection by decreasing virus internalization. Receptor for THBS1. Interaction with THBS1 stimulates phosphorylation of SIRPA. In response to THBS1, involved in ROS signaling in non-phagocytic cells, stimulating NADPH oxidase-derived ROS production. The chain is Tyrosine-protein phosphatase non-receptor type substrate 1 (Sirpa) from Rattus norvegicus (Rat).